Consider the following 282-residue polypeptide: Chromatin modification-related protein YNG2 (282 aa).

A coiled-coil region spans residues 35-86 (LIEEKKKYEQKESQIHKFIRQQGSIPKHPQEDGLDKEIKESLLKCQSLQREK). The disordered stretch occupies residues 123-217 (DGDMDSAAEA…KGQNGSPENE (95 aa)). Residues 129-143 (AAEASRESSVVSNSS) are compositionally biased toward low complexity. A Phosphoserine modification is found at serine 183. Threonine 185 carries the phosphothreonine modification. Phosphoserine is present on serine 188. Basic and acidic residues predominate over residues 191-203 (IEKKIARTKEFKN). The span at 204 to 214 (SRNGKGQNGSP) shows a compositional bias: polar residues. The PHD-type zinc-finger motif lies at 222–271 (TLYCFCQRVSFGEMVACDGPNCKYEWFHYDCVNLKEPPKGTWYCPECKIE). Positions 225, 227, 238, 243, 249, 252, 265, and 268 each coordinate Zn(2+).

This sequence belongs to the ING family. Interacts with H3K4me3 and to a lesser extent with H3K4me2. Component of the NuA4 histone acetyltransferase complex composed of at least ACT1, ARP4, YAF9, VID21, SWC4, EAF3, EAF5, EAF6, EAF7, EPL1, ESA1, TRA1 and YNG2.

The protein localises to the nucleus. Functionally, component of the NuA4 histone acetyltransferase complex which is involved in transcriptional activation of selected genes principally by acetylation of nucleosomal histone H4 and H2A. The NuA4 complex is also involved in DNA repair. Involved in cell cycle progression and meiosis. This chain is Chromatin modification-related protein YNG2 (YNG2), found in Saccharomyces cerevisiae (strain ATCC 204508 / S288c) (Baker's yeast).